Reading from the N-terminus, the 207-residue chain is dTTP/UTP pyrophosphatase (207 aa).

Catalysis depends on Asp-80, which acts as the Proton acceptor.

Belongs to the Maf family. YhdE subfamily. It depends on a divalent metal cation as a cofactor.

It is found in the cytoplasm. It carries out the reaction dTTP + H2O = dTMP + diphosphate + H(+). The catalysed reaction is UTP + H2O = UMP + diphosphate + H(+). Nucleoside triphosphate pyrophosphatase that hydrolyzes dTTP and UTP. May have a dual role in cell division arrest and in preventing the incorporation of modified nucleotides into cellular nucleic acids. The polypeptide is dTTP/UTP pyrophosphatase (maf1) (Agrobacterium fabrum (strain C58 / ATCC 33970) (Agrobacterium tumefaciens (strain C58))).